The following is a 283-amino-acid chain: Thymidylate synthase (283 aa).

Residues R31 and 145–146 (RR) contribute to the dUMP site. The active-site Nucleophile is the C165. Residues 185–188 (RSAD), N196, and 226–228 (HIY) contribute to the dUMP site. D188 contacts (6R)-5,10-methylene-5,6,7,8-tetrahydrofolate. A (6R)-5,10-methylene-5,6,7,8-tetrahydrofolate-binding site is contributed by S282.

It belongs to the thymidylate synthase family. Bacterial-type ThyA subfamily. Homodimer.

It is found in the cytoplasm. It catalyses the reaction dUMP + (6R)-5,10-methylene-5,6,7,8-tetrahydrofolate = 7,8-dihydrofolate + dTMP. Its pathway is pyrimidine metabolism; dTTP biosynthesis. Its function is as follows. Catalyzes the reductive methylation of 2'-deoxyuridine-5'-monophosphate (dUMP) to 2'-deoxythymidine-5'-monophosphate (dTMP) while utilizing 5,10-methylenetetrahydrofolate (mTHF) as the methyl donor and reductant in the reaction, yielding dihydrofolate (DHF) as a by-product. This enzymatic reaction provides an intracellular de novo source of dTMP, an essential precursor for DNA biosynthesis. This chain is Thymidylate synthase, found in Symbiobacterium thermophilum (strain DSM 24528 / JCM 14929 / IAM 14863 / T).